A 465-amino-acid polypeptide reads, in one-letter code: Probable Xaa-Pro aminopeptidase pepP (465 aa).

Residues Asp263, Asp274, Glu397, and Glu437 each contribute to the Mn(2+) site.

The protein belongs to the peptidase M24B family. It depends on Mn(2+) as a cofactor.

It carries out the reaction Release of any N-terminal amino acid, including proline, that is linked to proline, even from a dipeptide or tripeptide.. Functionally, catalyzes the removal of a penultimate prolyl residue from the N-termini of peptides. In Emericella nidulans (strain FGSC A4 / ATCC 38163 / CBS 112.46 / NRRL 194 / M139) (Aspergillus nidulans), this protein is Probable Xaa-Pro aminopeptidase pepP (pepP).